The chain runs to 113 residues: Large ribosomal subunit protein uL22 (113 aa).

The protein belongs to the universal ribosomal protein uL22 family. In terms of assembly, part of the 50S ribosomal subunit.

Functionally, this protein binds specifically to 23S rRNA; its binding is stimulated by other ribosomal proteins, e.g. L4, L17, and L20. It is important during the early stages of 50S assembly. It makes multiple contacts with different domains of the 23S rRNA in the assembled 50S subunit and ribosome. The globular domain of the protein is located near the polypeptide exit tunnel on the outside of the subunit, while an extended beta-hairpin is found that lines the wall of the exit tunnel in the center of the 70S ribosome. In Xanthomonas axonopodis pv. citri (strain 306), this protein is Large ribosomal subunit protein uL22.